Here is a 171-residue protein sequence, read N- to C-terminus: MDLKDKLRHVMDFPKEGIDFIDITTVLQDPEAFRECMESFKTLAEKMGDFDLIVGSESRGFIFGAPLAYRMEKGFVPVRKKGKLPYKTVREEYDLEYGKDELEIHSDAIAPGEKVLIVDDLLATGGTTEANIKLVEKLGGEVTGIVYFIELMSLKGRDKLKGYNVDSIVKF.

Belongs to the purine/pyrimidine phosphoribosyltransferase family. Homodimer.

The protein localises to the cytoplasm. The enzyme catalyses AMP + diphosphate = 5-phospho-alpha-D-ribose 1-diphosphate + adenine. It participates in purine metabolism; AMP biosynthesis via salvage pathway; AMP from adenine: step 1/1. Its function is as follows. Catalyzes a salvage reaction resulting in the formation of AMP, that is energically less costly than de novo synthesis. This Ruminiclostridium cellulolyticum (strain ATCC 35319 / DSM 5812 / JCM 6584 / H10) (Clostridium cellulolyticum) protein is Adenine phosphoribosyltransferase.